Reading from the N-terminus, the 126-residue chain is MPDPSKSAPAPKKGSKKAVTKAQKKDGKKRKRGRKESYSIYVYKVLKQVHPDTGISSKAMGIMNSFVNDIFERIASEASRLAHYNKRSTITSREVQTAVRLLLPGELAKHAVSEGTKAVTKYTSSK.

The span at 1–12 (MPDPSKSAPAPK) shows a compositional bias: low complexity. The segment at 1–35 (MPDPSKSAPAPKKGSKKAVTKAQKKDGKKRKRGRK) is disordered. The residue at position 2 (Pro-2) is an N-acetylproline. Lys-6 carries the N6-(2-hydroxyisobutyryl)lysine; alternate modification. The residue at position 6 (Lys-6) is an N6-(beta-hydroxybutyryl)lysine; alternate. Lys-6 carries the post-translational modification N6-acetyllysine; alternate. An N6-butyryllysine; alternate modification is found at Lys-6. Lys-6 is modified (N6-crotonyllysine; alternate). At Lys-6 the chain carries N6-lactoyllysine; alternate. Residue Lys-6 forms a Glycyl lysine isopeptide (Lys-Gly) (interchain with G-Cter in SUMO2); alternate linkage. Ser-7 is subject to ADP-ribosylserine. Lys-12 carries the post-translational modification N6-(beta-hydroxybutyryl)lysine; alternate. Residues Lys-12 and Lys-13 each carry the N6-acetyllysine; alternate modification. N6-crotonyllysine; alternate is present on residues Lys-12 and Lys-13. Lys-12 carries the N6-lactoyllysine; alternate modification. Residue Lys-13 is modified to N6-(2-hydroxyisobutyryl)lysine; alternate. At Ser-15 the chain carries Phosphoserine; by STK4/MST1. N6-acetyllysine; alternate occurs at positions 16, 17, 21, and 24. Lys-16, Lys-17, Lys-21, and Lys-24 each carry N6-crotonyllysine; alternate. N6-lactoyllysine; alternate occurs at positions 16, 17, 21, and 24. N6-(beta-hydroxybutyryl)lysine; alternate is present on residues Lys-17 and Lys-21. At Lys-17 the chain carries N6-glutaryllysine; alternate. An N6-(2-hydroxyisobutyryl)lysine; alternate mark is found at Lys-21 and Lys-24. An N6-butyryllysine; alternate modification is found at Lys-21. Lys-21 participates in a covalent cross-link: Glycyl lysine isopeptide (Lys-Gly) (interchain with G-Cter in SUMO2); alternate. At Lys-25 the chain carries N6-(2-hydroxyisobutyryl)lysine. Lys-35 carries the post-translational modification N6-(2-hydroxyisobutyryl)lysine; alternate. Lys-35 carries the post-translational modification N6-(beta-hydroxybutyryl)lysine; alternate. Lys-35 carries the N6-crotonyllysine; alternate modification. Lys-35 bears the N6-glutaryllysine; alternate mark. Residue Lys-35 is modified to N6-succinyllysine; alternate. Lys-35 participates in a covalent cross-link: Glycyl lysine isopeptide (Lys-Gly) (interchain with G-Cter in ubiquitin); alternate. At Glu-36 the chain carries PolyADP-ribosyl glutamic acid. The residue at position 37 (Ser-37) is a Phosphoserine; by AMPK. N6-(2-hydroxyisobutyryl)lysine; alternate is present on residues Lys-44, Lys-47, and Lys-58. N6-lactoyllysine; alternate is present on Lys-44. Residues Lys-44 and Lys-47 each carry the N6-glutaryllysine; alternate modification. Lys-47 is modified (N6-methyllysine; alternate). Lys-58 carries the N6,N6-dimethyllysine; alternate modification. Arg-80 carries the dimethylated arginine modification. Lys-86 is subject to N6-(2-hydroxyisobutyryl)lysine; alternate. At Lys-86 the chain carries N6-(beta-hydroxybutyryl)lysine; alternate. Lys-86 is subject to N6-acetyllysine; alternate. Lys-86 is modified (N6-lactoyllysine; alternate). An N6,N6,N6-trimethyllysine; alternate modification is found at Lys-86. Omega-N-methylarginine occurs at positions 87 and 93. At Lys-109 the chain carries N6-(2-hydroxyisobutyryl)lysine; alternate. Lys-109 is modified (N6-lactoyllysine; alternate). Position 109 is an N6-glutaryllysine; alternate (Lys-109). Lys-109 is subject to N6-methyllysine; alternate. O-linked (GlcNAc) serine glycosylation occurs at Ser-113. At Thr-116 the chain carries Phosphothreonine. An N6-(2-hydroxyisobutyryl)lysine; alternate mark is found at Lys-117 and Lys-121. Residues Lys-117 and Lys-121 each carry the N6-(beta-hydroxybutyryl)lysine; alternate modification. N6-lactoyllysine; alternate occurs at positions 117 and 121. Lys-117 and Lys-121 each carry N6-glutaryllysine; alternate. 2 positions are modified to N6-succinyllysine; alternate: Lys-117 and Lys-121. Lys-117 carries the post-translational modification N6-malonyllysine; alternate. Lys-117 is modified (N6-methylated lysine; alternate). Lys-121 is covalently cross-linked (Glycyl lysine isopeptide (Lys-Gly) (interchain with G-Cter in ubiquitin); alternate).

It belongs to the histone H2B family. In terms of assembly, the nucleosome is a histone octamer containing two molecules each of H2A, H2B, H3 and H4 assembled in one H3-H4 heterotetramer and two H2A-H2B heterodimers. The octamer wraps approximately 147 bp of DNA. Monoubiquitination at Lys-35 (H2BK34Ub) by the MSL1/MSL2 dimer is required for histone H3 'Lys-4' (H3K4me) and 'Lys-79' (H3K79me) methylation and transcription activation at specific gene loci, such as HOXA9 and MEIS1 loci. Similarly, monoubiquitination at Lys-121 (H2BK120Ub) by the RNF20/40 complex gives a specific tag for epigenetic transcriptional activation and is also prerequisite for histone H3 'Lys-4' and 'Lys-79' methylation. It also functions cooperatively with the FACT dimer to stimulate elongation by RNA polymerase II. H2BK120Ub also acts as a regulator of mRNA splicing: deubiquitination by USP49 is required for efficient cotranscriptional splicing of a large set of exons. In terms of processing, phosphorylation at Ser-37 (H2BS36ph) by AMPK in response to stress promotes transcription. Phosphorylated on Ser-15 (H2BS14ph) by STK4/MST1 during apoptosis; which facilitates apoptotic chromatin condensation. Also phosphorylated on Ser-15 in response to DNA double strand breaks (DSBs), and in correlation with somatic hypermutation and immunoglobulin class-switch recombination. Post-translationally, glcNAcylation at Ser-113 promotes monoubiquitination of Lys-121. It fluctuates in response to extracellular glucose, and associates with transcribed genes. ADP-ribosylated by PARP1 or PARP2 on Ser-7 (H2BS6ADPr) in response to DNA damage. H2BS6ADPr promotes recruitment of CHD1L. Poly ADP-ribosylation on Glu-36 (H2BE35ADPr) by PARP1 regulates adipogenesis: it inhibits phosphorylation at Ser-37 (H2BS36ph), thereby blocking expression of pro-adipogenetic genes. In terms of processing, crotonylation (Kcr) is specifically present in male germ cells and marks testis-specific genes in post-meiotic cells, including X-linked genes that escape sex chromosome inactivation in haploid cells. Crotonylation marks active promoters and enhancers and confers resistance to transcriptional repressors. It is also associated with post-meiotically activated genes on autosomes. Post-translationally, lactylated in macrophages by EP300/P300 by using lactoyl-CoA directly derived from endogenous or exogenous lactate, leading to stimulates gene transcription.

It localises to the nucleus. Its subcellular location is the chromosome. In terms of biological role, core component of nucleosome. Nucleosomes wrap and compact DNA into chromatin, limiting DNA accessibility to the cellular machineries which require DNA as a template. Histones thereby play a central role in transcription regulation, DNA repair, DNA replication and chromosomal stability. DNA accessibility is regulated via a complex set of post-translational modifications of histones, also called histone code, and nucleosome remodeling. The protein is Histone H2B type 3-B of Homo sapiens (Human).